A 212-amino-acid chain; its full sequence is UDP-N-acetylglucosamine transferase subunit ALG13 (212 aa).

The protein belongs to the glycosyltransferase 28 family. As to quaternary structure, heterodimer with ALG14 to form a functional enzyme.

The protein resides in the endoplasmic reticulum. The catalysed reaction is an N-acetyl-alpha-D-glucosaminyl-diphospho-di-trans,poly-cis-dolichol + UDP-N-acetyl-alpha-D-glucosamine = an N,N'-diacetylchitobiosyl-diphospho-di-trans,poly-cis-dolichol + UDP + H(+). Functionally, involved in protein N-glycosylation. Essential for the second step of the dolichol-linked oligosaccharide pathway. The sequence is that of UDP-N-acetylglucosamine transferase subunit ALG13 (ALG13) from Debaryomyces hansenii (strain ATCC 36239 / CBS 767 / BCRC 21394 / JCM 1990 / NBRC 0083 / IGC 2968) (Yeast).